We begin with the raw amino-acid sequence, 104 residues long: Small ribosomal subunit protein uS10 (104 aa).

Belongs to the universal ribosomal protein uS10 family. In terms of assembly, part of the 30S ribosomal subunit.

In terms of biological role, involved in the binding of tRNA to the ribosomes. This chain is Small ribosomal subunit protein uS10, found in Dichelobacter nodosus (strain VCS1703A).